The primary structure comprises 219 residues: Holliday junction branch migration complex subunit RuvA (219 aa).

The tract at residues 1–67 (MIGWLRGERI…DDGSSLFGFP (67 aa)) is domain I. The domain II stretch occupies residues 68-146 (DRRERDLFRV…AWSAEKNSDH (79 aa)). Residues 147 to 161 (SDLSLVDRSDLKSLP) are flexible linker. Residues 162–219 (IEPDPLQDLQLTLSTLGYEDLEIRRAMRAVATGEEVPAANDGDGWLRASLRWLNRPSA) form a domain III region.

Belongs to the RuvA family. Homotetramer. Forms an RuvA(8)-RuvB(12)-Holliday junction (HJ) complex. HJ DNA is sandwiched between 2 RuvA tetramers; dsDNA enters through RuvA and exits via RuvB. An RuvB hexamer assembles on each DNA strand where it exits the tetramer. Each RuvB hexamer is contacted by two RuvA subunits (via domain III) on 2 adjacent RuvB subunits; this complex drives branch migration. In the full resolvosome a probable DNA-RuvA(4)-RuvB(12)-RuvC(2) complex forms which resolves the HJ.

Its subcellular location is the cytoplasm. Its function is as follows. The RuvA-RuvB-RuvC complex processes Holliday junction (HJ) DNA during genetic recombination and DNA repair, while the RuvA-RuvB complex plays an important role in the rescue of blocked DNA replication forks via replication fork reversal (RFR). RuvA specifically binds to HJ cruciform DNA, conferring on it an open structure. The RuvB hexamer acts as an ATP-dependent pump, pulling dsDNA into and through the RuvAB complex. HJ branch migration allows RuvC to scan DNA until it finds its consensus sequence, where it cleaves and resolves the cruciform DNA. This chain is Holliday junction branch migration complex subunit RuvA, found in Synechococcus sp. (strain CC9311).